Here is a 497-residue protein sequence, read N- to C-terminus: Pentatricopeptide repeat-containing protein At2g36240 (497 aa).

9 PPR repeats span residues 156–186, 192–226, 227–261, 262–296, 297–331, 332–366, 367–401, 402–436, and 437–471; these read LEPI…MKRL, NVGV…RAKP, DVCT…GCEP, NVVS…GCRF, SEAT…RVLP, SEFD…GQTP, CFIA…GILP, DSVT…GYEP, and DETT…DMLP.

Belongs to the PPR family. P subfamily.

This chain is Pentatricopeptide repeat-containing protein At2g36240, found in Arabidopsis thaliana (Mouse-ear cress).